The chain runs to 411 residues: Serine hydroxymethyltransferase (411 aa).

(6S)-5,6,7,8-tetrahydrofolate contacts are provided by residues Leu-119 and 123–125 (GHL). Residue Lys-228 is modified to N6-(pyridoxal phosphate)lysine. 351 to 353 (SPF) provides a ligand contact to (6S)-5,6,7,8-tetrahydrofolate.

This sequence belongs to the SHMT family. As to quaternary structure, homodimer. The cofactor is pyridoxal 5'-phosphate.

Its subcellular location is the cytoplasm. It catalyses the reaction (6R)-5,10-methylene-5,6,7,8-tetrahydrofolate + glycine + H2O = (6S)-5,6,7,8-tetrahydrofolate + L-serine. It participates in one-carbon metabolism; tetrahydrofolate interconversion. It functions in the pathway amino-acid biosynthesis; glycine biosynthesis; glycine from L-serine: step 1/1. Its function is as follows. Catalyzes the reversible interconversion of serine and glycine with tetrahydrofolate (THF) serving as the one-carbon carrier. This reaction serves as the major source of one-carbon groups required for the biosynthesis of purines, thymidylate, methionine, and other important biomolecules. Also exhibits THF-independent aldolase activity toward beta-hydroxyamino acids, producing glycine and aldehydes, via a retro-aldol mechanism. The protein is Serine hydroxymethyltransferase of Clostridium botulinum (strain Eklund 17B / Type B).